Reading from the N-terminus, the 324-residue chain is MDLQKIKNQILDGRNLCIEDAYELENAPLNELLEAANEVRAKFCGNYFNFCSIINVKSGKCSENCKYCAQSAHFDTKCEIYDILPFEKIMPLAKLNDDAGVARFSLVASGKGLHKKDDLQKVIEIYKKLKSHTKFHLCASFGIVSKEILAELKKSGVKTYHHNLETSRKFFPKICTTHTYDDRINTIKSALCVGLDVCSGGIFGLGESLKDRIDMAYELKNLKVSSVPINILTPIKGTPLENSAPLCVDEILRSIAIFRLILPHVFLRLAGGRNNLKNSVKTALNGGINSAITGDFLTTCGDVAQSDKNLVSECGFVYKKSFDV.

The region spanning 43–273 is the Radical SAM core domain; the sequence is FCGNYFNFCS…HVFLRLAGGR (231 aa). Residues C61, C65, and C68 each coordinate [4Fe-4S] cluster. Residues S105, C138, C198, and R268 each coordinate [2Fe-2S] cluster.

The protein belongs to the radical SAM superfamily. Biotin synthase family. As to quaternary structure, homodimer. [4Fe-4S] cluster is required as a cofactor. The cofactor is [2Fe-2S] cluster.

The catalysed reaction is (4R,5S)-dethiobiotin + (sulfur carrier)-SH + 2 reduced [2Fe-2S]-[ferredoxin] + 2 S-adenosyl-L-methionine = (sulfur carrier)-H + biotin + 2 5'-deoxyadenosine + 2 L-methionine + 2 oxidized [2Fe-2S]-[ferredoxin]. It participates in cofactor biosynthesis; biotin biosynthesis; biotin from 7,8-diaminononanoate: step 2/2. Catalyzes the conversion of dethiobiotin (DTB) to biotin by the insertion of a sulfur atom into dethiobiotin via a radical-based mechanism. This Campylobacter hominis (strain ATCC BAA-381 / DSM 21671 / CCUG 45161 / LMG 19568 / NCTC 13146 / CH001A) protein is Biotin synthase.